Here is a 474-residue protein sequence, read N- to C-terminus: tRNA-2-methylthio-N(6)-dimethylallyladenosine synthase (474 aa).

Residues 3-120 (KKLHIKTWGC…LPEMINSVRG (118 aa)) form the MTTase N-terminal domain. Positions 12, 49, 83, 157, 161, and 164 each coordinate [4Fe-4S] cluster. The Radical SAM core domain maps to 143 to 375 (RAEGPTAFVS…QERINQQAMA (233 aa)). Residues 378–441 (RRMLGTTQRI…PNSLRGKVVR (64 aa)) enclose the TRAM domain.

Belongs to the methylthiotransferase family. MiaB subfamily. Monomer. [4Fe-4S] cluster is required as a cofactor.

Its subcellular location is the cytoplasm. It carries out the reaction N(6)-dimethylallyladenosine(37) in tRNA + (sulfur carrier)-SH + AH2 + 2 S-adenosyl-L-methionine = 2-methylsulfanyl-N(6)-dimethylallyladenosine(37) in tRNA + (sulfur carrier)-H + 5'-deoxyadenosine + L-methionine + A + S-adenosyl-L-homocysteine + 2 H(+). Its function is as follows. Catalyzes the methylthiolation of N6-(dimethylallyl)adenosine (i(6)A), leading to the formation of 2-methylthio-N6-(dimethylallyl)adenosine (ms(2)i(6)A) at position 37 in tRNAs that read codons beginning with uridine. This Escherichia coli (strain SE11) protein is tRNA-2-methylthio-N(6)-dimethylallyladenosine synthase.